Here is a 288-residue protein sequence, read N- to C-terminus: MSLSNFNLQSKVLLHPLVLFQIIDAYERRAKDVPEVLGTLLGIVAGKTGRIEITNCFSVVHRMHGDNNCHIDLDLKYDNDMLELAQIAYPQEKVVGWFSTGKAVSAAAVELHEYYERQCHSGQPLHLLMDTSLRGQRMNTRIFCAVATGVPGGTKGLMFSLLPMDIYFGSPDIVAMRHMGRQCALPPKEAGRLLPELEQVVDATKDIQQKLDLVLRYINDILNRKRRPDNTVGRALHDVLTSVPMVEAERFRHMFNTNMRDLLMSLTLSSMIKVQLQLSERLSNMVDA.

An MPN domain is found at 12-149 (VLLHPLVLFQ…TRIFCAVATG (138 aa)).

The protein belongs to the eIF-3 subunit F family. As to quaternary structure, component of the eukaryotic translation initiation factor 3 (eIF-3) complex. The eIF-3 complex interacts with pix.

The protein localises to the cytoplasm. In terms of biological role, component of the eukaryotic translation initiation factor 3 (eIF-3) complex, which is involved in protein synthesis of a specialized repertoire of mRNAs and, together with other initiation factors, stimulates binding of mRNA and methionyl-tRNAi to the 40S ribosome. The eIF-3 complex specifically targets and initiates translation of a subset of mRNAs involved in cell proliferation. This chain is Eukaryotic translation initiation factor 3 subunit F-2, found in Drosophila persimilis (Fruit fly).